Here is a 437-residue protein sequence, read N- to C-terminus: Tryptophan--tRNA ligase (437 aa).

A 'HIGH' region motif is present at residues 74–82 (PSGKVHLGH). The short motif at 321–325 (KMSSS) is the 'KMSKS' region element.

It belongs to the class-I aminoacyl-tRNA synthetase family.

The protein resides in the cytoplasm. It catalyses the reaction tRNA(Trp) + L-tryptophan + ATP = L-tryptophyl-tRNA(Trp) + AMP + diphosphate + H(+). This chain is Tryptophan--tRNA ligase, found in Methanosarcina acetivorans (strain ATCC 35395 / DSM 2834 / JCM 12185 / C2A).